Consider the following 380-residue polypeptide: Asporin (380 aa).

Residues 1–14 (MKEYVLLLFLALCS) form the signal peptide. Positions 15-32 (AKPFFSPSHIALKNMMLK) are excised as a propeptide. Positions 35 to 54 (EDTDDDDDDDDDDDDDDEDN) are enriched in acidic residues. The disordered stretch occupies residues 35–59 (EDTDDDDDDDDDDDDDDEDNSLFPT). Ser55 carries an O-linked (GalNAc...) serine glycan. The LRRNT domain occupies 66–102 (FFPFDLFPMCPFGCQCYSRVVHCSDLGLTSVPTNIPF). Disulfide bonds link Cys75-Cys81 and Cys79-Cys88. 11 LRR repeats span residues 103–124 (DTRM…DFKG), 127–148 (SLYG…AFLT), 151–173 (KLRR…PKSL), 174–193 (AELR…TFKG), 196–219 (ALHV…AFEG), 242–263 (TLLE…DFKR), 266–287 (ELQR…SLAN), 290–312 (RVRE…PELK), 313–334 (YLQI…DFCP), 335–357 (TVPK…VKYW), and 358–380 (EMQP…NFGM). The segment at 166 to 212 (PLNLPKSLAELRIHENKVKKIQKDTFKGMNALHVLEMSANPLDNNGI) is interaction with TGFB1. A glycan (N-linked (GlcNAc...) asparagine) is linked at Asn282. Cys333 and Cys366 form a disulfide bridge.

The protein belongs to the small leucine-rich proteoglycan (SLRP) family. SLRP class I subfamily. In terms of assembly, interacts with TGFB1, TGFB2 and TGFB3. DCN, BGN, and FMOD inhibit binding to TGFB1. Interacts with BMP2. Interacts in vitro with type II collagen. Interacts with type I collagen. DCN can inhibit collagen binding. In terms of processing, there is no serine/glycine dipeptide sequence expected for the attachment of O-linked glycosaminoglycans and this is probably not a proteoglycan. The O-linked polysaccharide on 54-Ser is probably the mucin type linked to GalNAc. The N-linked glycan at Asn-282 is composed of variable structures of GlcNAc, mannose, fucose, HexNAc and hexose. Higher levels in osteoarthritic articular cartilage, aorta, uterus. Moderate expression in small intestine, heart, liver, bladder, ovary, stomach, and in the adrenal, thyroid, and mammary glands. Low expression in trachea, bone marrow, and lung. Colocalizes with TGFB1 in chondrocytes within osteoarthritic (OA) lesions of articular cartilage.

It is found in the secreted. Its subcellular location is the extracellular space. The protein localises to the extracellular matrix. Functionally, negatively regulates periodontal ligament (PDL) differentiation and mineralization to ensure that the PDL is not ossified and to maintain homeostasis of the tooth-supporting system. Inhibits BMP2-induced cytodifferentiation of PDL cells by preventing its binding to BMPR1B/BMP type-1B receptor, resulting in inhibition of BMP-dependent activation of SMAD proteins. Critical regulator of TGF-beta in articular cartilage and plays an essential role in cartilage homeostasis and osteoarthritis (OA) pathogenesis. Negatively regulates chondrogenesis in the articular cartilage by blocking the TGF-beta/receptor interaction on the cell surface and inhibiting the canonical TGF-beta/Smad signal. Binds calcium and plays a role in osteoblast-driven collagen biomineralization activity. This is Asporin (ASPN) from Homo sapiens (Human).